The sequence spans 254 residues: MTTVAGGVRASARVLARGDGRGGTVLPVLEGEGPLAVRRTRGSGAEARVMLVGAMSGPLGGDHFEVGAHAANGARLRVGSAAATLALPGQDKAGARYDVRLTVDDDAELYWLPEQLISAGGSDLTVTTSVDLAAGARLLLREEQVLGRAGEEPGRLTSRLTLRIDGRGVLDQELLCGPGAPGGWDGPAGLAGHRAVGQLVVVRPGFATEPPAARVFEEGAAVMPLAGPAALVTAVAPDALRLRRLLDGALASLD.

Belongs to the UreD family. UreD, UreF and UreG form a complex that acts as a GTP-hydrolysis-dependent molecular chaperone, activating the urease apoprotein by helping to assemble the nickel containing metallocenter of UreC. The UreE protein probably delivers the nickel.

The protein resides in the cytoplasm. Its function is as follows. Required for maturation of urease via the functional incorporation of the urease nickel metallocenter. This Streptomyces coelicolor (strain ATCC BAA-471 / A3(2) / M145) protein is Urease accessory protein UreD.